Here is a 677-residue protein sequence, read N- to C-terminus: Methionine--tRNA ligase (677 aa).

Residues 15–25 (PYANGPIHIGH) carry the 'HIGH' region motif. Positions 146, 149, 159, and 162 each coordinate Zn(2+). The 'KMSKS' region signature appears at 332-336 (KMSKS). Lysine 335 serves as a coordination point for ATP. One can recognise a tRNA-binding domain in the interval 576-677 (DFAKVDLRVA…DGAKPGMRIM (102 aa)).

This sequence belongs to the class-I aminoacyl-tRNA synthetase family. MetG type 1 subfamily. In terms of assembly, homodimer. The cofactor is Zn(2+).

It localises to the cytoplasm. It catalyses the reaction tRNA(Met) + L-methionine + ATP = L-methionyl-tRNA(Met) + AMP + diphosphate. Its function is as follows. Is required not only for elongation of protein synthesis but also for the initiation of all mRNA translation through initiator tRNA(fMet) aminoacylation. This is Methionine--tRNA ligase from Idiomarina loihiensis (strain ATCC BAA-735 / DSM 15497 / L2-TR).